We begin with the raw amino-acid sequence, 473 residues long: Bifunctional protein HldE (473 aa).

The tract at residues 1–318 (MKLSMPRFDQ…RAIQREEGSE (318 aa)) is ribokinase. Residue 194–197 (NLSE) participates in ATP binding. The active site involves D263. Residues 343–473 (FTNGCFDILH…TAIVEKIRKH (131 aa)) are cytidylyltransferase.

It in the N-terminal section; belongs to the carbohydrate kinase PfkB family. In the C-terminal section; belongs to the cytidylyltransferase family. As to quaternary structure, homodimer.

It carries out the reaction D-glycero-beta-D-manno-heptose 7-phosphate + ATP = D-glycero-beta-D-manno-heptose 1,7-bisphosphate + ADP + H(+). The enzyme catalyses D-glycero-beta-D-manno-heptose 1-phosphate + ATP + H(+) = ADP-D-glycero-beta-D-manno-heptose + diphosphate. The protein operates within nucleotide-sugar biosynthesis; ADP-L-glycero-beta-D-manno-heptose biosynthesis; ADP-L-glycero-beta-D-manno-heptose from D-glycero-beta-D-manno-heptose 7-phosphate: step 1/4. It functions in the pathway nucleotide-sugar biosynthesis; ADP-L-glycero-beta-D-manno-heptose biosynthesis; ADP-L-glycero-beta-D-manno-heptose from D-glycero-beta-D-manno-heptose 7-phosphate: step 3/4. Its function is as follows. Catalyzes the phosphorylation of D-glycero-D-manno-heptose 7-phosphate at the C-1 position to selectively form D-glycero-beta-D-manno-heptose-1,7-bisphosphate. In terms of biological role, catalyzes the ADP transfer from ATP to D-glycero-beta-D-manno-heptose 1-phosphate, yielding ADP-D-glycero-beta-D-manno-heptose. This chain is Bifunctional protein HldE, found in Pseudomonas entomophila (strain L48).